Consider the following 654-residue polypeptide: tRNA 5-methylaminomethyl-2-thiouridine biosynthesis bifunctional protein MnmC (654 aa).

A tRNA (mnm(5)s(2)U34)-methyltransferase region spans residues 1–236 (MPTLLQHAQI…KWEVMSGAYV (236 aa)). The segment at 262 to 654 (IGAGLAGSSS…FGLRRLIRGK (393 aa)) is FAD-dependent cmnm(5)s(2)U34 oxidoreductase.

The protein in the N-terminal section; belongs to the methyltransferase superfamily. tRNA (mnm(5)s(2)U34)-methyltransferase family. It in the C-terminal section; belongs to the DAO family. It depends on FAD as a cofactor.

The protein localises to the cytoplasm. The catalysed reaction is 5-aminomethyl-2-thiouridine(34) in tRNA + S-adenosyl-L-methionine = 5-methylaminomethyl-2-thiouridine(34) in tRNA + S-adenosyl-L-homocysteine + H(+). Catalyzes the last two steps in the biosynthesis of 5-methylaminomethyl-2-thiouridine (mnm(5)s(2)U) at the wobble position (U34) in tRNA. Catalyzes the FAD-dependent demodification of cmnm(5)s(2)U34 to nm(5)s(2)U34, followed by the transfer of a methyl group from S-adenosyl-L-methionine to nm(5)s(2)U34, to form mnm(5)s(2)U34. The polypeptide is tRNA 5-methylaminomethyl-2-thiouridine biosynthesis bifunctional protein MnmC (Pseudomonas putida (strain ATCC 47054 / DSM 6125 / CFBP 8728 / NCIMB 11950 / KT2440)).